The primary structure comprises 487 residues: Glutamyl-tRNA(Gln) amidotransferase subunit A (487 aa).

Catalysis depends on charge relay system residues lysine 79 and serine 158. The Acyl-ester intermediate role is filled by serine 182.

It belongs to the amidase family. GatA subfamily. In terms of assembly, heterotrimer of A, B and C subunits.

It catalyses the reaction L-glutamyl-tRNA(Gln) + L-glutamine + ATP + H2O = L-glutaminyl-tRNA(Gln) + L-glutamate + ADP + phosphate + H(+). Allows the formation of correctly charged Gln-tRNA(Gln) through the transamidation of misacylated Glu-tRNA(Gln) in organisms which lack glutaminyl-tRNA synthetase. The reaction takes place in the presence of glutamine and ATP through an activated gamma-phospho-Glu-tRNA(Gln). The chain is Glutamyl-tRNA(Gln) amidotransferase subunit A from Ehrlichia chaffeensis (strain ATCC CRL-10679 / Arkansas).